The primary structure comprises 106 residues: Cytochrome c oxidase assembly factor 3 homolog, mitochondrial (106 aa).

Residues 1–34 (MASSGAGDPLDSKRGEAPFAQRIDPTREKLTPEQ) form a disordered region. N-acetylalanine is present on alanine 2. Topologically, residues 2–57 (ASSGAGDPLDSKRGEAPFAQRIDPTREKLTPEQLHSMRQAELAQWQKVLPRRRTRN) are mitochondrial matrix. A helical transmembrane segment spans residues 58–78 (IVTGLGIGALVLAIYGYTFYS). The stretch at 78–104 (SISQERFLDELEDEAKAARARALARAS) forms a coiled coil. Over 79–106 (ISQERFLDELEDEAKAARARALARASGS) the chain is Mitochondrial intermembrane.

This sequence belongs to the COA3 family. As to quaternary structure, along with COX14, core component of the MITRAC (mitochondrial translation regulation assembly intermediate of cytochrome c oxidase complex) complex. Interacts with MT-CO1/COX1, SMIM20, SURF1 and TIMM21.

The protein resides in the mitochondrion inner membrane. Its function is as follows. Core component of the MITRAC (mitochondrial translation regulation assembly intermediate of cytochrome c oxidase complex) complex, that regulates cytochrome c oxidase assembly. MITRAC complexes regulate both translation of mitochondrial encoded components and assembly of nuclear-encoded components imported in mitochondrion. Required for efficient translation of MT-CO1 and mitochondrial respiratory chain complex IV assembly. In Homo sapiens (Human), this protein is Cytochrome c oxidase assembly factor 3 homolog, mitochondrial (COA3).